A 289-amino-acid chain; its full sequence is MAEITAALVKELRERTGQGMMECKKALVAAGGDIEKAIDDMRASGAIKAAKKAGNIAAEGSIAVKVSDDNKAAVIIEVNAQTDFLALQEDFKAFVAESLEKAFADKLTDAAPLIADRESAREALVAKCGENVNIRRLTRVEGDVVGAYLHGHRIGVLVNLKGGNPELAKEIAMHVAASNPQFLSPSQVSEEAVAKEKEIFLALNADKIAGKPENIVENMVKGRINKFLAEASLVEQPFVKDPEIKVGELAKKAGAEIVSFVRYEVGEGIEKAEVDFAAEVAAQLAASKQ.

The tract at residues 82 to 85 (TDFL) is involved in Mg(2+) ion dislocation from EF-Tu.

This sequence belongs to the EF-Ts family.

It is found in the cytoplasm. Associates with the EF-Tu.GDP complex and induces the exchange of GDP to GTP. It remains bound to the aminoacyl-tRNA.EF-Tu.GTP complex up to the GTP hydrolysis stage on the ribosome. The protein is Elongation factor Ts of Azotobacter vinelandii (strain DJ / ATCC BAA-1303).